Consider the following 919-residue polypeptide: Envelope glycoprotein B (919 aa).

A signal peptide spans methionine 1–alanine 28. The Virion surface portion of the chain corresponds to valine 29 to proline 788. 5 disulfide bridges follow: cysteine 81–cysteine 586, cysteine 98–cysteine 542, cysteine 172–cysteine 237, cysteine 330–cysteine 378, and cysteine 607–cysteine 647. The N-linked (GlcNAc...) asparagine; by host glycan is linked to asparagine 106. An involved in fusion and/or binding to host membrane region spans residues valine 138–histidine 144. Asparagine 216 carries an N-linked (GlcNAc...) asparagine; by host glycan. The involved in fusion and/or binding to host membrane stretch occupies residues glycine 223–threonine 231. N-linked (GlcNAc...) asparagine; by host glycosylation is found at asparagine 321, asparagine 364, asparagine 438, asparagine 456, asparagine 493, asparagine 496, and asparagine 499. Residues asparagine 666 and asparagine 688 are each glycosylated (N-linked (GlcNAc...) asparagine; by host). 2 hydrophobic membrane proximal region regions span residues isoleucine 733 to asparagine 786 and threonine 765 to isoleucine 785. The chain crosses the membrane as a helical span at residues phenylalanine 789–tyrosine 809. Over arginine 810–valine 919 the chain is Intravirion. The short motif at tyrosine 864–methionine 867 is the Golgi targeting element. Residues arginine 900 to valine 919 are disordered. The Internalization motif motif lies at tyrosine 904–leucine 907. Basic and acidic residues predominate over residues arginine 906–valine 919.

It belongs to the herpesviridae glycoprotein B family. In terms of assembly, homotrimer; disulfide-linked. Binds to heparan sulfate proteoglycans. Interacts with gH/gL heterodimer. Post-translationally, a proteolytic cleavage by host furin generates two subunits that remain linked by disulfide bonds.

Its subcellular location is the virion membrane. The protein localises to the host cell membrane. It is found in the host endosome membrane. The protein resides in the host Golgi apparatus membrane. In terms of biological role, envelope glycoprotein that forms spikes at the surface of virion envelope. Essential for the initial attachment to heparan sulfate moieties of the host cell surface proteoglycans. Involved in fusion of viral and cellular membranes leading to virus entry into the host cell. Following initial binding to its host receptors, membrane fusion is mediated by the fusion machinery composed at least of gB and the heterodimer gH/gL. May be involved in the fusion between the virion envelope and the outer nuclear membrane during virion egress. The chain is Envelope glycoprotein B from Equus caballus (Horse).